Consider the following 400-residue polypeptide: Renin (400 aa).

Positions 1–23 are cleaved as a signal peptide; sequence MDAWRGMPRWGLLLLLWGSCTFG. A propeptide spans 24–60 (activation peptide); it reads LPTETTTFKRISLKRMPSIRESLKERGVDMARLGPER. The N-linked (GlcNAc...) asparagine glycan is linked to Asn-65. The Peptidase A1 domain maps to 80–397; the sequence is YYGEIGIGTP…DRGNNRIGFA (318 aa). Asp-98 is a catalytic residue. The cysteines at positions 111 and 118 are disulfide-linked. N-linked (GlcNAc...) asparagine glycosylation is present at Asn-135. The cysteines at positions 277 and 281 are disulfide-linked. The active site involves Asp-286. An intrachain disulfide couples Cys-319 to Cys-356.

This sequence belongs to the peptidase A1 family. In terms of assembly, interacts with ATP6AP2.

The protein localises to the secreted. It localises to the membrane. The enzyme catalyses Cleavage of Leu-|-Xaa bond in angiotensinogen to generate angiotensin I.. Its activity is regulated as follows. Interaction with ATP6AP2 results in a 5-fold increased efficiency in angiotensinogen processing. Functionally, renin is a highly specific endopeptidase, whose only known function is to generate angiotensin I from angiotensinogen in the plasma, initiating a cascade of reactions that produce an elevation of blood pressure and increased sodium retention by the kidney. The polypeptide is Renin (REN) (Callithrix jacchus (White-tufted-ear marmoset)).